A 1251-amino-acid polypeptide reads, in one-letter code: Immunoglobulin-like and fibronectin type III domain-containing protein 1 (1251 aa).

An Ig-like 1 domain is found at 29 to 119 (PDFEQKPVTS…GEAACSVRLT (91 aa)). The disordered stretch occupies residues 61–81 (RWQNSKGDLSDSSKYKISSSP). A coiled-coil region spans residues 188-221 (IVDYRGMLRRLQEMKKEQEDKMAQYINTISSLRH). The 90-residue stretch at 309-398 (PRVVVPLAET…SSAWLVVEAG (90 aa)) folds into the Ig-like 2 domain. Positions 403-433 (LQSTSADHKLQSRRSGKDGRLDIYGERRDAT) are enriched in basic and acidic residues. The interval 403-454 (LQSTSADHKLQSRRSGKDGRLDIYGERRDATRSSTSRYKPGTGSFSKDAQGP) is disordered. Residues 434-449 (RSSTSRYKPGTGSFSK) show a composition bias toward polar residues. The 86-residue stretch at 454–539 (PMGHFSQGLA…GDQQSEATLT (86 aa)) folds into the Ig-like 3 domain. 3 Fibronectin type-III domains span residues 646–741 (PPQG…VAPE), 746–845 (APSA…MRPP), and 847–942 (LVRN…AMPV). Positions 946-1030 (PKFLVDSSTK…LRTLQGKEVA (85 aa)) constitute an Ig-like 4 domain. A Fibronectin type-III 4 domain is found at 1043 to 1137 (APGPIHLQEN…TSQPWCIPRQ (95 aa)). Positions 1151–1245 (PDLSQKPRFL…GQAVSTATLI (95 aa)) constitute an Ig-like 5 domain.

Interacts with FLNC. Interacts with KY. As to expression, expressed in skeletal muscle.

It is found in the nucleus. The protein localises to the cytoplasm. Its subcellular location is the myofibril. The protein resides in the sarcomere. It localises to the z line. This is Immunoglobulin-like and fibronectin type III domain-containing protein 1 (IGFN1) from Homo sapiens (Human).